We begin with the raw amino-acid sequence, 292 residues long: Ribosome-inactivating protein saporin-2 (292 aa).

The signal sequence occupies residues Met1 to Ala24. Glu200 is an active-site residue.

It belongs to the ribosome-inactivating protein family. Type 1 RIP subfamily.

The catalysed reaction is Endohydrolysis of the N-glycosidic bond at one specific adenosine on the 28S rRNA.. Functionally, ribosome-inactivating protein of type 1, inhibits protein synthesis in animal cells. Useful as immunotoxin for pharmacological applications. This is Ribosome-inactivating protein saporin-2 (SAP2) from Saponaria officinalis (Common soapwort).